Here is a 149-residue protein sequence, read N- to C-terminus: D-aminoacyl-tRNA deacylase (149 aa).

The Gly-cisPro motif, important for rejection of L-amino acids signature appears at 137–138 (GP).

The protein belongs to the DTD family. In terms of assembly, homodimer.

It is found in the cytoplasm. The enzyme catalyses glycyl-tRNA(Ala) + H2O = tRNA(Ala) + glycine + H(+). The catalysed reaction is a D-aminoacyl-tRNA + H2O = a tRNA + a D-alpha-amino acid + H(+). An aminoacyl-tRNA editing enzyme that deacylates mischarged D-aminoacyl-tRNAs. Also deacylates mischarged glycyl-tRNA(Ala), protecting cells against glycine mischarging by AlaRS. Acts via tRNA-based rather than protein-based catalysis; rejects L-amino acids rather than detecting D-amino acids in the active site. By recycling D-aminoacyl-tRNA to D-amino acids and free tRNA molecules, this enzyme counteracts the toxicity associated with the formation of D-aminoacyl-tRNA entities in vivo and helps enforce protein L-homochirality. In Pediococcus pentosaceus (strain ATCC 25745 / CCUG 21536 / LMG 10740 / 183-1w), this protein is D-aminoacyl-tRNA deacylase.